Consider the following 180-residue polypeptide: Cytochrome c oxidase assembly protein CtaG (180 aa).

Topologically, residues 1-8 (MSKKSNKS) are cytoplasmic. A helical; Signal-anchor for type II membrane protein membrane pass occupies residues 9-29 (LAFSLLGLIVSMVLLSFAAVP). At 30 to 180 (LYNLFCKVTG…SFFKVRDVKK (151 aa)) the chain is on the periplasmic side.

The protein belongs to the COX11/CtaG family.

The protein localises to the cell inner membrane. Its function is as follows. Exerts its effect at some terminal stage of cytochrome c oxidase synthesis, probably by being involved in the insertion of the copper B into subunit I. This Rickettsia bellii (strain RML369-C) protein is Cytochrome c oxidase assembly protein CtaG.